A 342-amino-acid polypeptide reads, in one-letter code: Serpentine receptor class r-10 (342 aa).

Residues 1 to 11 (MTGELWLTLVD) are Extracellular-facing. Residues 12–32 (TADIVGFSMTFCVNIVLLFLL) form a helical membrane-spanning segment. Residues 33–38 (KNRGKN) are Cytoplasmic-facing. Residues 39-59 (LGTYKHLMAFFSVFSIFYAII) traverse the membrane as a helical segment. The Extracellular segment spans residues 60–92 (ESILRPIMHIENATFFLISRKRFNYSTRLGKIN). N-linked (GlcNAc...) asparagine glycans are attached at residues N71 and N83. Residues 93–113 (SAFYCACFATSFVVSGVHFVY) form a helical membrane-spanning segment. Topologically, residues 114-131 (RFFASCKPHLLRSFNMPY) are cytoplasmic. The chain crosses the membrane as a helical span at residues 132–152 (LLLWPLGCSIPVMMWASVSYF). Residues 153–202 (LYPDTAFTEAAVTNVLNTHYHSIKKDNVSYIAYVYYQYDENGVRYVYLKN) are Extracellular-facing. N-linked (GlcNAc...) asparagine glycosylation is present at N179. A helical membrane pass occupies residues 203 to 223 (LLGCFVHYFVMSATFVVMFIC). Topologically, residues 224 to 257 (GYLTWKTMRKHKTASDRTRQLQKQLFKALVLQTL) are cytoplasmic. A helical membrane pass occupies residues 258 to 278 (IPTIFMYAPTGVMFIAPFFSI). At 279-285 (NLNANAN) the chain is on the extracellular side. A helical transmembrane segment spans residues 286-306 (FIVFCSFLYPGLDPLILILII). Over 307–342 (RDFRQTVFKFFCLRKKNSVDESRSTTRANMSQVATH) the chain is Cytoplasmic.

The protein belongs to the nematode receptor-like protein str family. As to quaternary structure, interacts with odr-4.

Its subcellular location is the cell projection. The protein resides in the cilium membrane. Functionally, an odorant receptor which affects chemotaxis to the volatile odorant diacetyl. Specifies AWA neuronal cell fate via the odr-7 pathway. The chain is Serpentine receptor class r-10 from Caenorhabditis briggsae.